Here is a 183-residue protein sequence, read N- to C-terminus: Putative 3-methyladenine DNA glycosylase (183 aa).

The protein belongs to the DNA glycosylase MPG family.

The polypeptide is Putative 3-methyladenine DNA glycosylase (Rickettsia conorii (strain ATCC VR-613 / Malish 7)).